Reading from the N-terminus, the 346-residue chain is Holliday junction branch migration complex subunit RuvB (346 aa).

The span at 1 to 11 shows a compositional bias: polar residues; that stretch reads MTEQRTIASSA. A disordered region spans residues 1–20; it reads MTEQRTIASSATREDEAADA. The interval 1–183 is large ATPase domain (RuvB-L); sequence MTEQRTIASS…FGIVQRLEFY (183 aa). ATP-binding positions include Ile-22, Arg-23, Gly-64, Lys-67, Thr-68, Thr-69, 130–132, Arg-173, Tyr-183, and Arg-220; that span reads EDF. Thr-68 lines the Mg(2+) pocket. Residues 184–254 are small ATPAse domain (RuvB-S); sequence SPQELTRIVI…VAQAAMQMLK (71 aa). Residues 257 to 346 form a head domain (RuvB-H) region; that stretch reads PEGFDELDRR…PAIGEPGDLF (90 aa). DNA contacts are provided by Arg-293, Arg-312, and Arg-317.

Belongs to the RuvB family. Homohexamer. Forms an RuvA(8)-RuvB(12)-Holliday junction (HJ) complex. HJ DNA is sandwiched between 2 RuvA tetramers; dsDNA enters through RuvA and exits via RuvB. An RuvB hexamer assembles on each DNA strand where it exits the tetramer. Each RuvB hexamer is contacted by two RuvA subunits (via domain III) on 2 adjacent RuvB subunits; this complex drives branch migration. In the full resolvosome a probable DNA-RuvA(4)-RuvB(12)-RuvC(2) complex forms which resolves the HJ.

The protein localises to the cytoplasm. The catalysed reaction is ATP + H2O = ADP + phosphate + H(+). In terms of biological role, the RuvA-RuvB-RuvC complex processes Holliday junction (HJ) DNA during genetic recombination and DNA repair, while the RuvA-RuvB complex plays an important role in the rescue of blocked DNA replication forks via replication fork reversal (RFR). RuvA specifically binds to HJ cruciform DNA, conferring on it an open structure. The RuvB hexamer acts as an ATP-dependent pump, pulling dsDNA into and through the RuvAB complex. RuvB forms 2 homohexamers on either side of HJ DNA bound by 1 or 2 RuvA tetramers; 4 subunits per hexamer contact DNA at a time. Coordinated motions by a converter formed by DNA-disengaged RuvB subunits stimulates ATP hydrolysis and nucleotide exchange. Immobilization of the converter enables RuvB to convert the ATP-contained energy into a lever motion, pulling 2 nucleotides of DNA out of the RuvA tetramer per ATP hydrolyzed, thus driving DNA branch migration. The RuvB motors rotate together with the DNA substrate, which together with the progressing nucleotide cycle form the mechanistic basis for DNA recombination by continuous HJ branch migration. Branch migration allows RuvC to scan DNA until it finds its consensus sequence, where it cleaves and resolves cruciform DNA. The sequence is that of Holliday junction branch migration complex subunit RuvB from Xanthomonas campestris pv. campestris (strain B100).